The sequence spans 865 residues: Rifampicin phosphotransferase (865 aa).

The interval serine 2–threonine 314 is ATP-binding. Residues lysine 23, arginine 117, glycine 132, threonine 136, glutamine 183, glutamate 297, glutamine 309, and arginine 311 each coordinate ATP. Residues phenylalanine 327 to alanine 752 form a rifampicin-binding region. Residues glutamate 403 to alanine 430 form a disordered region. A compositionally biased stretch (low complexity) spans proline 409–glycine 424. A swivel phosphohistidine region spans residues glycine 765 to leucine 863. Histidine 823 serves as the catalytic Tele-phosphohistidine intermediate.

Belongs to the rifampicin phosphotransferase family.

The catalysed reaction is rifampicin + ATP + H2O = 21-phosphorifampicin + AMP + phosphate + 2 H(+). Its function is as follows. Catalyzes the phosphorylation of rifampicin, also known as rifampin (RIF), leading to its inactivation. Confers high level resistance to a variety of clinically used rifamycin antibiotics. The sequence is that of Rifampicin phosphotransferase from Streptomyces sp.